The primary structure comprises 427 residues: Enolase (427 aa).

Gln-162 serves as a coordination point for (2R)-2-phosphoglycerate. Glu-204 acts as the Proton donor in catalysis. Mg(2+) is bound by residues Asp-241, Glu-282, and Asp-309. 4 residues coordinate (2R)-2-phosphoglycerate: Lys-334, Arg-363, Ser-364, and Lys-385. Lys-334 functions as the Proton acceptor in the catalytic mechanism.

This sequence belongs to the enolase family. Mg(2+) is required as a cofactor.

The protein localises to the cytoplasm. The protein resides in the secreted. Its subcellular location is the cell surface. The enzyme catalyses (2R)-2-phosphoglycerate = phosphoenolpyruvate + H2O. Its pathway is carbohydrate degradation; glycolysis; pyruvate from D-glyceraldehyde 3-phosphate: step 4/5. Catalyzes the reversible conversion of 2-phosphoglycerate (2-PG) into phosphoenolpyruvate (PEP). It is essential for the degradation of carbohydrates via glycolysis. This is Enolase from Frankia alni (strain DSM 45986 / CECT 9034 / ACN14a).